The primary structure comprises 271 residues: tRNA (guanine-N(7)-)-methyltransferase (271 aa).

Residues Glu95, Glu120, Asp147, and Asp175 each coordinate S-adenosyl-L-methionine. The active site involves Asp175. Substrate is bound by residues Lys179, Asp211, and 249–252 (THFE).

It belongs to the class I-like SAM-binding methyltransferase superfamily. TrmB family.

It catalyses the reaction guanosine(46) in tRNA + S-adenosyl-L-methionine = N(7)-methylguanosine(46) in tRNA + S-adenosyl-L-homocysteine. The protein operates within tRNA modification; N(7)-methylguanine-tRNA biosynthesis. Its function is as follows. Catalyzes the formation of N(7)-methylguanine at position 46 (m7G46) in tRNA. The protein is tRNA (guanine-N(7)-)-methyltransferase of Rhodopirellula baltica (strain DSM 10527 / NCIMB 13988 / SH1).